Consider the following 250-residue polypeptide: uncharacterized protein (250 aa).

2 disordered regions span residues 85-107 and 158-198; these read NQFP…QSEP and EPVP…AKVP. Low complexity predominate over residues 167–176; sequence PAVEQPQVKQ.

This is an uncharacterized protein from Mycoplasma pneumoniae (strain ATCC 29342 / M129 / Subtype 1) (Mycoplasmoides pneumoniae).